Here is a 465-residue protein sequence, read N- to C-terminus: GTPase Der (465 aa).

EngA-type G domains follow at residues 3–166 (FLVA…LNEF) and 184–358 (IHFS…ACAN). GTP-binding positions include 9 to 16 (GRANVGKS), 56 to 60 (DTGGI), 118 to 121 (NKVD), 190 to 197 (GRPNVGKS), 237 to 241 (DTAGV), and 302 to 305 (NKWD). One can recognise a KH-like domain in the interval 359 to 443 (KKITTADATR…PIVFEFKQSE (85 aa)).

Belongs to the TRAFAC class TrmE-Era-EngA-EngB-Septin-like GTPase superfamily. EngA (Der) GTPase family. Associates with the 50S ribosomal subunit.

In terms of biological role, GTPase that plays an essential role in the late steps of ribosome biogenesis. This chain is GTPase Der, found in Francisella philomiragia subsp. philomiragia (strain ATCC 25017 / CCUG 19701 / FSC 153 / O#319-036).